The chain runs to 211 residues: Protein GrpE (211 aa).

The disordered stretch occupies residues 1-43 (MTDETTKNGPDATAADAAADAAANVEIDNSVQEEAKQPDPLEL). Positions 11-23 (DATAADAAADAAA) are enriched in low complexity. Residues 33 to 43 (EEAKQPDPLEL) show a composition bias toward basic and acidic residues.

Belongs to the GrpE family. Homodimer.

The protein localises to the cytoplasm. Participates actively in the response to hyperosmotic and heat shock by preventing the aggregation of stress-denatured proteins, in association with DnaK and GrpE. It is the nucleotide exchange factor for DnaK and may function as a thermosensor. Unfolded proteins bind initially to DnaJ; upon interaction with the DnaJ-bound protein, DnaK hydrolyzes its bound ATP, resulting in the formation of a stable complex. GrpE releases ADP from DnaK; ATP binding to DnaK triggers the release of the substrate protein, thus completing the reaction cycle. Several rounds of ATP-dependent interactions between DnaJ, DnaK and GrpE are required for fully efficient folding. In Rhizobium etli (strain ATCC 51251 / DSM 11541 / JCM 21823 / NBRC 15573 / CFN 42), this protein is Protein GrpE.